A 312-amino-acid polypeptide reads, in one-letter code: Very-long-chain 3-oxoacyl-CoA reductase (312 aa).

The chain crosses the membrane as a helical span at residues 4 to 24; it reads ALPAAGFLYWVGASTIAYLTL. 50–79 is an NADP(+) binding site; that stretch reads GEWAVVTGGTDGIGKSYAEELAKRGMKIVL. 2 consecutive transmembrane segments (helical) span residues 182 to 202 and 271 to 291; these read GVILNISSASGMLPVPLLTVY and GYVIHAIMGSINSILPRWIYF. S189 serves as a coordination point for substrate. Y202 serves as the catalytic Proton acceptor. Residues 308-312 carry the Di-lysine motif motif; it reads KTKKN.

It belongs to the short-chain dehydrogenases/reductases (SDR) family. 17-beta-HSD 3 subfamily.

It localises to the endoplasmic reticulum membrane. It carries out the reaction a very-long-chain (3R)-3-hydroxyacyl-CoA + NADP(+) = a very-long-chain 3-oxoacyl-CoA + NADPH + H(+). It catalyses the reaction 17beta-estradiol + NAD(+) = estrone + NADH + H(+). The catalysed reaction is 17beta-estradiol + NADP(+) = estrone + NADPH + H(+). The enzyme catalyses 3-oxooctadecanoyl-CoA + NADPH + H(+) = (3R)-hydroxyoctadecanoyl-CoA + NADP(+). It carries out the reaction (7Z,10Z,13Z,16Z)-3-oxodocosatetraenoyl-CoA + NADPH + H(+) = (3R)-hydroxy-(7Z,10Z,13Z,16Z)-docosatetraenoyl-CoA + NADP(+). It catalyses the reaction 3-oxo-(7Z,10Z,13Z,16Z,19Z)-docosapentaenoyl-CoA + NADPH + H(+) = (3R)-hydroxy-(7Z,10Z,13Z,16Z,19Z)-docosapentaenoyl-CoA + NADP(+). The catalysed reaction is (8Z,11Z,14Z)-3-oxoeicosatrienoyl-CoA + NADPH + H(+) = (3R)-hydroxy-(8Z,11Z,14Z)-eicosatrienoyl-CoA + NADP(+). It functions in the pathway lipid metabolism; fatty acid biosynthesis. Its pathway is steroid biosynthesis; estrogen biosynthesis. Its function is as follows. Catalyzes the second of the four reactions of the long-chain fatty acids elongation cycle. This endoplasmic reticulum-bound enzymatic process, allows the addition of two carbons to the chain of long- and very long-chain fatty acids/VLCFAs per cycle. This enzyme has a 3-ketoacyl-CoA reductase activity, reducing 3-ketoacyl-CoA to 3-hydroxyacyl-CoA, within each cycle of fatty acid elongation. Thereby, it may participate in the production of VLCFAs of different chain lengths that are involved in multiple biological processes as precursors of membrane lipids and lipid mediators. May also catalyze the transformation of estrone (E1) into estradiol (E2) and play a role in estrogen formation. This Rattus norvegicus (Rat) protein is Very-long-chain 3-oxoacyl-CoA reductase.